The chain runs to 188 residues: GMP synthase [glutamine-hydrolyzing] subunit A (188 aa).

The Glutamine amidotransferase type-1 domain maps to 2-188 (KVGLVYYGGQ…FKNFLGVCRK (187 aa)). C79 serves as the catalytic Nucleophile. Catalysis depends on residues H166 and E168.

In terms of assembly, heterodimer composed of a glutamine amidotransferase subunit (A) and a GMP-binding subunit (B).

It carries out the reaction XMP + L-glutamine + ATP + H2O = GMP + L-glutamate + AMP + diphosphate + 2 H(+). The protein operates within purine metabolism; GMP biosynthesis; GMP from XMP (L-Gln route): step 1/1. In terms of biological role, catalyzes the synthesis of GMP from XMP. This Saccharolobus solfataricus (strain ATCC 35092 / DSM 1617 / JCM 11322 / P2) (Sulfolobus solfataricus) protein is GMP synthase [glutamine-hydrolyzing] subunit A.